Reading from the N-terminus, the 367-residue chain is MSEAGVAPIEDGSQNSSGGSSGDAALKKSKGGAKVVKSRYMQIGRSKVSKNSLANTTVCSGGKVPERGSGGTPTRRSLAPHKAKITAAVPLPALDGSIFTKEDLQSTLLDGHRIARPDLDLSVINDRTLQKITPRPVVTSEQKKPKRDTTPVNLVPEDMVEMIESQTLLLTYLTIKMQKNLFRLEEKAERNLLLVNDQKDQLQETIHMMKRDLTLLQREERLRDLIEKQDEVLTPVVTSKDPFKDNYTTFATALDSTRHQLAIKNIHITGNRHRYLEELQKHLAITKSLLEEIMPSHASENAESFDTIKDLENIVLKTDEELARSFRQILDLSFKVNKEISLQSQKAVEETCESALVRQWYFDGSLP.

2 disordered regions span residues 1–35 (MSEAGVAPIEDGSQNSSGGSSGDAALKKSKGGAKV) and 54–81 (ANTTVCSGGKVPERGSGGTPTRRSLAPH). Positions 183 to 221 (RLEEKAERNLLLVNDQKDQLQETIHMMKRDLTLLQREER) form a coiled coil.

This sequence belongs to the HAUS8 family. In terms of assembly, component of the HAUS augmin-like complex. The complex interacts with the gamma-tubulin ring complex and this interaction is required for spindle assembly. Associates with microtubules. The interaction with microtubules is strong during mitosis, while it is weak or absent during interphase. It is unclear whether this interaction is direct or indirect.

The protein localises to the cytoplasm. The protein resides in the cytoskeleton. It is found in the microtubule organizing center. It localises to the centrosome. Its subcellular location is the spindle. The protein localises to the spindle pole. In terms of biological role, contributes to mitotic spindle assembly, maintenance of centrosome integrity and completion of cytokinesis as part of the HAUS augmin-like complex. The sequence is that of HAUS augmin-like complex subunit 8 (haus8) from Xenopus laevis (African clawed frog).